The chain runs to 158 residues: Transcription elongation factor GreA (158 aa).

Residues 53–73 (EQQGMVEARIRDIEAKLSNAQ) are a coiled coil.

It belongs to the GreA/GreB family.

In terms of biological role, necessary for efficient RNA polymerase transcription elongation past template-encoded arresting sites. The arresting sites in DNA have the property of trapping a certain fraction of elongating RNA polymerases that pass through, resulting in locked ternary complexes. Cleavage of the nascent transcript by cleavage factors such as GreA or GreB allows the resumption of elongation from the new 3'terminus. GreA releases sequences of 2 to 3 nucleotides. The polypeptide is Transcription elongation factor GreA (Pseudomonas aeruginosa (strain ATCC 15692 / DSM 22644 / CIP 104116 / JCM 14847 / LMG 12228 / 1C / PRS 101 / PAO1)).